A 271-amino-acid chain; its full sequence is Short-chain type dehydrogenase/reductase (271 aa).

25–49 (IVTGASRGIGREIALNMAEKGAKVV) is a binding site for NAD(+). Position 166 (serine 166) interacts with substrate. The active-site Proton acceptor is tyrosine 179.

It belongs to the short-chain dehydrogenases/reductases (SDR) family.

This chain is Short-chain type dehydrogenase/reductase, found in Picea abies (Norway spruce).